The following is a 348-amino-acid chain: uncharacterized protein (348 aa).

Its function is as follows. May be involved in apoptosis regulation. This is an uncharacterized protein from Rattus norvegicus (Rat).